Here is a 382-residue protein sequence, read N- to C-terminus: Cholinephosphotransferase 1 (382 aa).

The Cytoplasmic portion of the chain corresponds to 1–51 (MPQCECPEPLSAVQLKRLEEHKYSAAGRSLFEPPCQIYWNWLVQQIPTWVA). A helical transmembrane segment spans residues 52-72 (PNTLTTIGLVINVITTVILVY). N53 lines the CDP-choline pocket. The Lumenal segment spans residues 73-82 (YSPTATEEVP). Residues 83–107 (GWAFFLSALGLFIYQSLDAIDGKQA) form a helical membrane-spanning segment. Positions 100 and 103 each coordinate Mg(2+). R108 provides a ligand contact to CDP-choline. The Cytoplasmic portion of the chain corresponds to 108–114 (RRTNSSS). Residues 115-139 (ALGELFDHGCDAVSTVFVAVGTCIC) traverse the membrane as a helical segment. D121 is a binding site for Mg(2+). H122 functions as the Proton acceptor in the catalytic mechanism. D125 lines the Mg(2+) pocket. The Lumenal segment spans residues 140-149 (CGIGAYPNWM). The chain crosses the membrane as a helical span at residues 150 to 168 (FFCGFVGMFMFFCAHWQTY). The Cytoplasmic segment spans residues 169 to 179 (VSGTLRFGLVD). Residues 180 to 196 (VTEVQIAIIIMYLLTAF) form a helical membrane-spanning segment. At 197–211 (TGVSFWEMRVPVLGV) the chain is on the lumenal side. Residues 212–237 (NLQTFPILGIIGGFLYSTYNYFFVIM) traverse the membrane as a helical segment. Residues 238–254 (NGGVGKNGSTVADTSVL) are Cytoplasmic-facing. Residues 255–270 (TPGLHIGLILTLAFII) form a helical membrane-spanning segment. Residues 271–282 (FKKSSSHLFEHH) lie on the Lumenal side of the membrane. Residues 283–305 (PCLYVLTFGMVIAKISNKLVVAH) form a helical membrane-spanning segment. The Cytoplasmic portion of the chain corresponds to 306 to 318 (MTKSELHLQDTAF). The helical transmembrane segment at 319 to 328 (IGPGLLFLNQ) threads the bilayer. Residues 329 to 335 (YFNSYID) are Lumenal-facing. Residues 336–365 (EHIVLWIAMVLSLVDLVRYCTAVCLQIASH) traverse the membrane as a helical segment. Residues 366 to 382 (LRIRVFSISPQGHAHKD) lie on the Cytoplasmic side of the membrane.

Belongs to the CDP-alcohol phosphatidyltransferase class-I family. The cofactor is Mg(2+). Mn(2+) serves as cofactor.

Its subcellular location is the golgi apparatus membrane. The enzyme catalyses CDP-choline + a 1,2-diacyl-sn-glycerol = a 1,2-diacyl-sn-glycero-3-phosphocholine + CMP + H(+). The catalysed reaction is 1-octadecanoyl-2-(5Z,8Z,11Z,14Z-eicosatetraenoyl)-sn-glycerol + CDP-choline = 1-octadecanoyl-2-(5Z,8Z,11Z,14Z-eicosatetraenoyl)-sn-glycero-3-phosphocholine + CMP + H(+). It catalyses the reaction 1-hexadecanoyl-2-(9Z-octadecenoyl)-sn-glycerol + CDP-choline = 1-hexadecanoyl-2-(9Z-octadecenoyl)-sn-glycero-3-phosphocholine + CMP + H(+). It carries out the reaction 1-hexadecanoyl-2-(4Z,7Z,10Z,13Z,16Z,19Z-docosahexaenoyl)-sn-glycerol + CDP-choline = 1-hexadecanoyl-2-(4Z,7Z,10Z,13Z,16Z,19Z-docosahexaenoyl)-sn-glycero-3-phosphocholine + CMP + H(+). The enzyme catalyses 1,2-dioctanoyl-sn-glycerol + CDP-choline = 1,2-dioctanoyl-sn-glycero-3-phosphocholine + CMP + H(+). It functions in the pathway phospholipid metabolism; phosphatidylcholine biosynthesis; phosphatidylcholine from phosphocholine: step 2/2. In terms of biological role, catalyzes the final step of de novo phosphatidylcholine (PC) synthesis, i.e. the transfer of choline phosphate from CDP-choline to the free hydroxyl of a diacylglycerol (DAG), producing a PC. It thereby plays a central role in the formation and maintenance of vesicular membranes. The polypeptide is Cholinephosphotransferase 1 (chpt1) (Danio rerio (Zebrafish)).